The chain runs to 204 residues: Secreted phosphoprotein 24 (204 aa).

The first 23 residues, 1 to 23 (MEKRAMRMLAMFVLGTSFWSCAG), serve as a signal peptide directing secretion. Disulfide bonds link Cys86-Cys97 and Cys110-Cys128. Ser90 is modified (phosphoserine). A phosphoserine mark is found at Ser138, Ser139, Ser166, and Ser175. Residues 179–204 (MRRFPPPGNRSFPNQWPRARTNTGFE) are disordered.

This sequence belongs to the SPP2 family. In terms of processing, multiply phosphorylated at serine residues. Post-translationally, phosphorylation sites are present in the extracellular medium.

It is found in the secreted. Could coordinate an aspect of bone turnover. In Sus scrofa (Pig), this protein is Secreted phosphoprotein 24 (SPP2).